We begin with the raw amino-acid sequence, 309 residues long: tRNA uridine(34) hydroxylase (309 aa).

The 95-residue stretch at 130–224 (SDPDTIVIDT…YLEEVPQEES (95 aa)) folds into the Rhodanese domain. The active-site Cysteine persulfide intermediate is Cys184.

It belongs to the TrhO family.

It catalyses the reaction uridine(34) in tRNA + AH2 + O2 = 5-hydroxyuridine(34) in tRNA + A + H2O. Catalyzes oxygen-dependent 5-hydroxyuridine (ho5U) modification at position 34 in tRNAs. The protein is tRNA uridine(34) hydroxylase of Rhizobium leguminosarum bv. trifolii (strain WSM2304).